The chain runs to 35 residues: Photosystem II reaction center protein T (35 aa).

The helical transmembrane segment at 3 to 23 (ALVYTFLLVSTLGIIFFAIFF) threads the bilayer.

The protein belongs to the PsbT family. As to quaternary structure, PSII is composed of 1 copy each of membrane proteins PsbA, PsbB, PsbC, PsbD, PsbE, PsbF, PsbH, PsbI, PsbJ, PsbK, PsbL, PsbM, PsbT, PsbY, PsbZ, Psb30/Ycf12, at least 3 peripheral proteins of the oxygen-evolving complex and a large number of cofactors. It forms dimeric complexes.

It localises to the plastid. The protein resides in the chloroplast thylakoid membrane. Found at the monomer-monomer interface of the photosystem II (PS II) dimer, plays a role in assembly and dimerization of PSII. PSII is a light-driven water plastoquinone oxidoreductase, using light energy to abstract electrons from H(2)O, generating a proton gradient subsequently used for ATP formation. The polypeptide is Photosystem II reaction center protein T (Suaeda aralocaspica (Seablite)).